We begin with the raw amino-acid sequence, 85 residues long: Small ribosomal subunit protein bS16 (85 aa).

Belongs to the bacterial ribosomal protein bS16 family.

The protein is Small ribosomal subunit protein bS16 of Pelobacter propionicus (strain DSM 2379 / NBRC 103807 / OttBd1).